The primary structure comprises 244 residues: tRNA pseudouridine synthase A (244 aa).

Residue Asp-52 is the Nucleophile of the active site. Tyr-110 contributes to the substrate binding site.

This sequence belongs to the tRNA pseudouridine synthase TruA family. Homodimer.

The enzyme catalyses uridine(38/39/40) in tRNA = pseudouridine(38/39/40) in tRNA. Functionally, formation of pseudouridine at positions 38, 39 and 40 in the anticodon stem and loop of transfer RNAs. The protein is tRNA pseudouridine synthase A of Clostridium botulinum (strain Alaska E43 / Type E3).